Reading from the N-terminus, the 97-residue chain is Large ribosomal subunit protein bL27 (97 aa).

Positions M1–F12 are excised as a propeptide. The segment at A13 to A37 is disordered.

Belongs to the bacterial ribosomal protein bL27 family. Post-translationally, the N-terminus is cleaved by ribosomal processing cysteine protease Prp.

The sequence is that of Large ribosomal subunit protein bL27 from Streptococcus pneumoniae serotype 2 (strain D39 / NCTC 7466).